A 369-amino-acid polypeptide reads, in one-letter code: Dehydrogenase pigH (369 aa).

In terms of domain architecture, Enoyl reductase (ER) spans 13–367 (KAPLLEVKAA…QGVSAKKIVV (355 aa)). 44-49 (IDWLIQ) is an NADP(+) binding site. N-linked (GlcNAc...) asparagine glycosylation is found at Asn-79 and Asn-101. Residues 197-200 (SRKN) and Tyr-215 contribute to the NADP(+) site. A helical membrane pass occupies residues 280–300 (TIIFFVSWIISFKFKGLLKGI). Residue 360–361 (VS) coordinates NADP(+).

This sequence belongs to the zinc-containing alcohol dehydrogenase family.

The protein localises to the membrane. The protein operates within secondary metabolite biosynthesis. Dehydrogenase; part of the gene cluster that mediates the biosynthesis of azaphilone pigments (MonAzPs), a complex mixture of compounds with a common azaphilone skeleton very widely used as food colorants. Within the pathway, pigH might be involved in the late steps of yellow pigments monascin and ankaflavin biosynthesis. The first step of the pathway is performed by the nrPKS pigA that forms the hexaketide precursor from successive condensations of five malonyl-CoA units, with a simple acetyl-CoA starter unit. The role of esterase pigG is not clear, but it may play at most a supplementary role in the formation of the benzaldehyde produced by the pigA nrPKS. This very reactive benzaldehyde is intercepted by the pigC ketoreductase that to provide the first stable enzyme-free MonAzPs intermediate, 6-(4-hydroxy-2-oxopentyl)-3-methyl-2,4-dioxocyclohexane carbaldehyde, also known as M7PKS-1. The FAD-dependent monooxygenase pigN hydroxylates M7PKS-1 at C-4, which triggers the formation of the pyran ring. PigJ, pigK and pigD are involved in the acetylation of the pyran ring. PigJ and pigK form the two subunits of a dedicated fungal FAS that produces the side chain fatty acyl moiety of MonAzPs and pigD transfers the fatty acyl chain to the C-4 alcohol. PigM and pigO are involved in the elimination of the omega-1 alcohol. PigM acts as an O-acetyltransferase that synthesizes the putative O-11 acetyl intermediate whereas pigO eliminates acetic acid to yield an intermediate with a C10(11) double bond. The dehydration of the C-11 alcohol followed by the reduction of the C6(7) double bond by the NAD(P)H-dependent oxidoreductase pigE increases the electrophilicity of the C-5 ketone of the resulting acyl benzopyran. This in turn sets up the C-5 ketone for an intramolecular Knoevenagel aldol condensation with the C-20 enol of the side chain. This condensation affords the characteristic linear tricyclic carbon skeletons of the yellow pigments that serve as the common precursors for the classical yellow pigments monascin and ankaflavin, orange pigments rubopunctatin and monascorubrin, and red pigments ribropunctamine and monascorubramine. The FAD-dependent oxidoreductase pigF is especially invoved in the biosynthesis of orange and red pigments via desaturation of C6(7). This chain is Dehydrogenase pigH, found in Monascus ruber (Mold).